A 289-amino-acid polypeptide reads, in one-letter code: Ribosomal RNA small subunit methyltransferase A (289 aa).

6 residues coordinate S-adenosyl-L-methionine: N28, L30, G55, E76, D101, and N125.

The protein belongs to the class I-like SAM-binding methyltransferase superfamily. rRNA adenine N(6)-methyltransferase family. RsmA subfamily.

It is found in the cytoplasm. The catalysed reaction is adenosine(1518)/adenosine(1519) in 16S rRNA + 4 S-adenosyl-L-methionine = N(6)-dimethyladenosine(1518)/N(6)-dimethyladenosine(1519) in 16S rRNA + 4 S-adenosyl-L-homocysteine + 4 H(+). In terms of biological role, specifically dimethylates two adjacent adenosines (A1518 and A1519) in the loop of a conserved hairpin near the 3'-end of 16S rRNA in the 30S particle. May play a critical role in biogenesis of 30S subunits. This chain is Ribosomal RNA small subunit methyltransferase A, found in Clostridioides difficile (strain 630) (Peptoclostridium difficile).